The sequence spans 222 residues: Octanoyltransferase (222 aa).

The BPL/LPL catalytic domain maps to 35 to 214 (GTAPELIWLL…HLDGFLARLD (180 aa)). Substrate-binding positions include 73–80 (RGGRYTYH), 145–147 (AIG), and 158–160 (GFS). The Acyl-thioester intermediate role is filled by cysteine 176.

Belongs to the LipB family.

The protein resides in the cytoplasm. The enzyme catalyses octanoyl-[ACP] + L-lysyl-[protein] = N(6)-octanoyl-L-lysyl-[protein] + holo-[ACP] + H(+). Its pathway is protein modification; protein lipoylation via endogenous pathway; protein N(6)-(lipoyl)lysine from octanoyl-[acyl-carrier-protein]: step 1/2. Its function is as follows. Catalyzes the transfer of endogenously produced octanoic acid from octanoyl-acyl-carrier-protein onto the lipoyl domains of lipoate-dependent enzymes. Lipoyl-ACP can also act as a substrate although octanoyl-ACP is likely to be the physiological substrate. The sequence is that of Octanoyltransferase from Novosphingobium aromaticivorans (strain ATCC 700278 / DSM 12444 / CCUG 56034 / CIP 105152 / NBRC 16084 / F199).